The chain runs to 227 residues: Uridylate kinase (227 aa).

7–11 lines the ATP pocket; it reads KISGK. G44 provides a ligand contact to UMP. The ATP site is built by G45 and R49. UMP-binding positions include D66 and 114-120; that span reads FQPGQST. Positions 140, 141, 146, and 149 each coordinate ATP.

Belongs to the UMP kinase family. As to quaternary structure, homohexamer.

It is found in the cytoplasm. The catalysed reaction is UMP + ATP = UDP + ADP. It participates in pyrimidine metabolism; CTP biosynthesis via de novo pathway; UDP from UMP (UMPK route): step 1/1. Its activity is regulated as follows. Unlike most bacteria, is not activated by GTP. UTP acts as a competitive inhibitor against both substrates. High concentration of UMP abolishes the inhibition of UTP at low ATP concentrations, indicating that UTP binds to the acceptor site (UMP site). Its function is as follows. Catalyzes the reversible phosphorylation of UMP to UDP, with ATP as the most efficient phosphate donor. Is also able to phosphorylate dUMP, although much less efficiently. The protein is Uridylate kinase (pyrH) of Saccharolobus solfataricus (strain ATCC 35092 / DSM 1617 / JCM 11322 / P2) (Sulfolobus solfataricus).